Consider the following 290-residue polypeptide: L-fucono-1,5-lactonase (290 aa).

This sequence belongs to the metallo-dependent hydrolases superfamily.

The catalysed reaction is L-fucono-1,5-lactone + H2O = L-fuconate + H(+). It carries out the reaction L-fucono-1,4-lactone + H2O = L-fuconate + H(+). It catalyses the reaction D-arabinono-1,4-lactone + H2O = D-arabinonate + H(+). The enzyme catalyses L-xylono-1,4-lactone + H2O = L-xylonate + H(+). The catalysed reaction is L-galactono-1,4-lactone + H2O = L-galactonate + H(+). Its function is as follows. Catalyzes the hydrolysis of L-fucono-1,5-lactone to L-fuconate. Can also hydrolyze L-fucono-1,4-lactone, L-galactono-1,4-lactone D-arabinono-1,4-lactone and L-xylono-1,4-lactone. This chain is L-fucono-1,5-lactonase, found in Burkholderia ambifaria (strain ATCC BAA-244 / DSM 16087 / CCUG 44356 / LMG 19182 / AMMD) (Burkholderia cepacia (strain AMMD)).